The following is a 98-amino-acid chain: Integration host factor subunit alpha (98 aa).

Positions 53–69 are enriched in basic and acidic residues; it reads DLREKSERPGRNPKTGE. The interval 53 to 73 is disordered; it reads DLREKSERPGRNPKTGEDIPI.

It belongs to the bacterial histone-like protein family. As to quaternary structure, heterodimer of an alpha and a beta chain.

This protein is one of the two subunits of integration host factor, a specific DNA-binding protein that functions in genetic recombination as well as in transcriptional and translational control. The sequence is that of Integration host factor subunit alpha from Aliivibrio fischeri (strain ATCC 700601 / ES114) (Vibrio fischeri).